The primary structure comprises 59 residues: MHLAIVGALTLVLTLFVLHYTTKDDRCYILINGHSAFTNCPASPDLAKVISQLKPHNHG.

Over 1 to 3 the chain is Lumenal; the sequence is MHL. Residues 4–21 traverse the membrane as a helical segment; sequence AIVGALTLVLTLFVLHYT. Residues 22–59 lie on the Cytoplasmic side of the membrane; the sequence is TKDDRCYILINGHSAFTNCPASPDLAKVISQLKPHNHG.

Belongs to the Tymovirales TGBp3 protein family.

Its subcellular location is the host endoplasmic reticulum membrane. Its function is as follows. Plays a role in viral cell-to-cell propagation, by facilitating genome transport to neighboring plant cells through plasmosdesmata. May induce the formation of granular vesicles derived from the Endoplasmic reticulum, which align on actin filaments. The polypeptide is Movement protein TGBp3 (Chenopodium album (Fat hen)).